We begin with the raw amino-acid sequence, 429 residues long: 3-phosphoshikimate 1-carboxyvinyltransferase (429 aa).

3 residues coordinate 3-phosphoshikimate: Lys-22, Ser-23, and Arg-27. Lys-22 is a phosphoenolpyruvate binding site. Phosphoenolpyruvate is bound by residues Gly-94 and Arg-122. 3-phosphoshikimate is bound by residues Ser-167, Gln-169, Asp-315, and Lys-342. Gln-169 lines the phosphoenolpyruvate pocket. Asp-315 serves as the catalytic Proton acceptor. Residues Arg-346 and Arg-388 each coordinate phosphoenolpyruvate.

The protein belongs to the EPSP synthase family. In terms of assembly, monomer.

The protein resides in the cytoplasm. It catalyses the reaction 3-phosphoshikimate + phosphoenolpyruvate = 5-O-(1-carboxyvinyl)-3-phosphoshikimate + phosphate. Its pathway is metabolic intermediate biosynthesis; chorismate biosynthesis; chorismate from D-erythrose 4-phosphate and phosphoenolpyruvate: step 6/7. In terms of biological role, catalyzes the transfer of the enolpyruvyl moiety of phosphoenolpyruvate (PEP) to the 5-hydroxyl of shikimate-3-phosphate (S3P) to produce enolpyruvyl shikimate-3-phosphate and inorganic phosphate. This chain is 3-phosphoshikimate 1-carboxyvinyltransferase, found in Citrifermentans bemidjiense (strain ATCC BAA-1014 / DSM 16622 / JCM 12645 / Bem) (Geobacter bemidjiensis).